A 564-amino-acid chain; its full sequence is Glutamate--tRNA ligase (564 aa).

A 'HIGH' region motif is present at residues 107–117 (PNPNGPPTLGS).

It belongs to the class-I aminoacyl-tRNA synthetase family. Glutamate--tRNA ligase type 2 subfamily.

The protein localises to the cytoplasm. It catalyses the reaction tRNA(Glu) + L-glutamate + ATP = L-glutamyl-tRNA(Glu) + AMP + diphosphate. Catalyzes the attachment of glutamate to tRNA(Glu) in a two-step reaction: glutamate is first activated by ATP to form Glu-AMP and then transferred to the acceptor end of tRNA(Glu). This Methanothrix thermoacetophila (strain DSM 6194 / JCM 14653 / NBRC 101360 / PT) (Methanosaeta thermophila) protein is Glutamate--tRNA ligase.